Consider the following 391-residue polypeptide: Autotransporter heptosyltransferase Aah (391 aa).

Residues threonine 101, leucine 102, and glycine 103 each coordinate ADP-D-glycero-beta-D-manno-heptose. Aspartate 104 (proton acceptor) is an active-site residue. The ADP-D-glycero-beta-D-manno-heptose site is built by glutamine 218, threonine 220, lysine 224, arginine 251, leucine 275, glycine 296, and glutamate 320. Cysteine 333, cysteine 336, cysteine 352, and cysteine 364 together coordinate Fe(3+).

The protein belongs to the glycosyltransferase 9 family. In terms of assembly, homododecamer composed of 6 homodimers forming a ring. The cofactor is Fe(3+).

It localises to the cytoplasm. It catalyses the reaction ADP-D-glycero-beta-D-manno-heptose + L-seryl-[protein] = O-(D-glycero-alpha-D-manno-heptosyl)-L-seryl-[protein] + ADP + H(+). It carries out the reaction ADP-L-glycero-beta-D-manno-heptose + L-seryl-[protein] = O-(L-glycero-alpha-D-manno-heptosyl)-L-seryl-[protein] + ADP + H(+). Its function is as follows. Glycosylates autotransporter AIDA-I. Catalyzes the addition of both L, D-heptose and D, D-heptose sugars. Probably by glycosylating AIDA-I, involved in bacteria adhesion to host mammalian cells. This is Autotransporter heptosyltransferase Aah from Escherichia coli.